The primary structure comprises 309 residues: UPF0252 protein PH0672 (309 aa).

2 helical membrane passes run 5–25 (SVII…NESI) and 106–126 (AVLT…LMIF).

This sequence belongs to the UPF0252 family.

It is found in the cell membrane. The protein is UPF0252 protein PH0672 of Pyrococcus horikoshii (strain ATCC 700860 / DSM 12428 / JCM 9974 / NBRC 100139 / OT-3).